Reading from the N-terminus, the 203-residue chain is Glycerol-3-phosphate acyltransferase (203 aa).

5 helical membrane passes run 13 to 33 (TLAC…LILT), 66 to 86 (TLLL…LWGV), 88 to 108 (AGMA…WLSF), 118 to 138 (IGVL…AWLA), and 156 to 176 (IIPV…FAVM).

The protein belongs to the PlsY family. Probably interacts with PlsX.

It localises to the cell inner membrane. The enzyme catalyses an acyl phosphate + sn-glycerol 3-phosphate = a 1-acyl-sn-glycero-3-phosphate + phosphate. It participates in lipid metabolism; phospholipid metabolism. Its function is as follows. Catalyzes the transfer of an acyl group from acyl-phosphate (acyl-PO(4)) to glycerol-3-phosphate (G3P) to form lysophosphatidic acid (LPA). This enzyme utilizes acyl-phosphate as fatty acyl donor, but not acyl-CoA or acyl-ACP. The sequence is that of Glycerol-3-phosphate acyltransferase from Sinorhizobium medicae (strain WSM419) (Ensifer medicae).